An 80-amino-acid polypeptide reads, in one-letter code: Large ribosomal subunit protein eL13 (80 aa).

This sequence belongs to the eukaryotic ribosomal protein eL13 family.

The protein is Large ribosomal subunit protein eL13 of Aeropyrum pernix (strain ATCC 700893 / DSM 11879 / JCM 9820 / NBRC 100138 / K1).